We begin with the raw amino-acid sequence, 133 residues long: Small ribosomal subunit protein uS8 (133 aa).

It belongs to the universal ribosomal protein uS8 family. Part of the 30S ribosomal subunit.

Functionally, one of the primary rRNA binding proteins, it binds directly to 16S rRNA central domain where it helps coordinate assembly of the platform of the 30S subunit. The sequence is that of Small ribosomal subunit protein uS8 from Staphylothermus marinus (strain ATCC 43588 / DSM 3639 / JCM 9404 / F1).